A 320-amino-acid polypeptide reads, in one-letter code: Ferrochelatase (320 aa).

Fe cation is bound by residues His-194 and Glu-275.

This sequence belongs to the ferrochelatase family.

It localises to the cytoplasm. The catalysed reaction is heme b + 2 H(+) = protoporphyrin IX + Fe(2+). Its pathway is porphyrin-containing compound metabolism; protoheme biosynthesis; protoheme from protoporphyrin-IX: step 1/1. Its function is as follows. Catalyzes the ferrous insertion into protoporphyrin IX. This chain is Ferrochelatase, found in Vibrio cholerae serotype O1 (strain ATCC 39315 / El Tor Inaba N16961).